The sequence spans 405 residues: Phosphoglycerate kinase (405 aa).

Residues 24 to 26 (DFN), R40, 63 to 66 (HLGR), R122, and R162 contribute to the substrate site. Residues K212, E331, and 361–364 (GGDS) contribute to the ATP site.

It belongs to the phosphoglycerate kinase family. In terms of assembly, monomer.

The protein localises to the cytoplasm. The enzyme catalyses (2R)-3-phosphoglycerate + ATP = (2R)-3-phospho-glyceroyl phosphate + ADP. It functions in the pathway carbohydrate degradation; glycolysis; pyruvate from D-glyceraldehyde 3-phosphate: step 2/5. The chain is Phosphoglycerate kinase (pgk) from Corynebacterium glutamicum (strain ATCC 13032 / DSM 20300 / JCM 1318 / BCRC 11384 / CCUG 27702 / LMG 3730 / NBRC 12168 / NCIMB 10025 / NRRL B-2784 / 534).